The following is a 542-amino-acid chain: MLDILRDNPLLLLFIVAGIGYPLGRVRIGGIHLGVAAVLFVGLAFGALDPSLKLPEIVYQFGLALFVYCVGLSSGHGFLRSFRGKGVIYNLLTLGVILLAAALLLIPHYLLSLRPGETAGVFAGLLTSTPALAAAVEYLTRAGAAGQLSDPVVGYSIAYPASVLGVILAIYLAERCFRIDYRAEARTLKDVPGVSPEITCWTLRVCRPKAFGRTVRDLVAEHRLQVVFGRIRRGDHADVVSWETHLEEGDLVTAVGPVEELERAAQVIGCVSEVQADLDRSEVDMREVFVSNPEVAGRTLRELNLPNRFGAVVSRVWRGDLQLLPYADMPLELGDRVRVLSRRERQQEVAAYLGDSYRAISEIDIAVLGLGMALGIGLGLVPIPLPGGITVRLGLAGGPLIVALFLGARQRTGSLVWVLPYSANMLLRQMGLTIFLAAVGTRSGYEFAQMLTQPRGWAILGASAAIIVLLSWVMLYVGYRWLRIPMGLLTGMVAGMQTQSATLGFALDQAGNDLPTVGYAMVYPMAMVVKIVLAPVIIAVLT.

Helical transmembrane passes span isoleucine 4–leucine 23, isoleucine 28–alanine 47, isoleucine 57–leucine 79, glycine 86–histidine 108, and proline 151–alanine 173. RCK C-terminal domains follow at residues arginine 186–cysteine 270 and glutamate 273–serine 356. A run of 6 helical transmembrane segments spans residues isoleucine 365 to proline 384, isoleucine 389 to alanine 408, leucine 415 to alanine 437, tryptophan 457 to tyrosine 479, isoleucine 484 to alanine 506, and tyrosine 519 to leucine 541.

It belongs to the AAE transporter (TC 2.A.81) family.

It is found in the cell membrane. This is an uncharacterized protein from Symbiobacterium thermophilum (strain DSM 24528 / JCM 14929 / IAM 14863 / T).